A 64-amino-acid chain; its full sequence is MPIVHIDLIAGRSQEQLKNLVKDVTDAVSKNTGAPAEHIHVILSEMQKNRYSVGGVLKSDEEAE.

P2 (proton acceptor; via imino nitrogen) is an active-site residue.

Belongs to the 4-oxalocrotonate tautomerase family.

This is Probable tautomerase lp_1712 from Lactiplantibacillus plantarum (strain ATCC BAA-793 / NCIMB 8826 / WCFS1) (Lactobacillus plantarum).